Consider the following 189-residue polypeptide: Phosphoheptose isomerase (189 aa).

Positions 34–189 (LADSLAGGRK…CDLVEKRLFP (156 aa)) constitute an SIS domain. A substrate-binding site is contributed by 49–51 (NGG). Residues H58 and E62 each contribute to the Zn(2+) site. Residues E62, 91–92 (ND), 117–119 (STS), S122, and Q169 contribute to the substrate site. Positions 169 and 177 each coordinate Zn(2+).

The protein belongs to the SIS family. GmhA subfamily. As to quaternary structure, homotetramer. Zn(2+) is required as a cofactor.

Its subcellular location is the cytoplasm. The catalysed reaction is 2 D-sedoheptulose 7-phosphate = D-glycero-alpha-D-manno-heptose 7-phosphate + D-glycero-beta-D-manno-heptose 7-phosphate. The protein operates within carbohydrate biosynthesis; D-glycero-D-manno-heptose 7-phosphate biosynthesis; D-glycero-alpha-D-manno-heptose 7-phosphate and D-glycero-beta-D-manno-heptose 7-phosphate from sedoheptulose 7-phosphate: step 1/1. In terms of biological role, catalyzes the isomerization of sedoheptulose 7-phosphate in D-glycero-D-manno-heptose 7-phosphate. This Geobacter sulfurreducens (strain ATCC 51573 / DSM 12127 / PCA) protein is Phosphoheptose isomerase.